The following is a 547-amino-acid chain: Chaperonin GroEL (547 aa).

ATP-binding positions include 30–33 (TLGP), K51, 87–91 (DGTTT), G415, and D496.

It belongs to the chaperonin (HSP60) family. Forms a cylinder of 14 subunits composed of two heptameric rings stacked back-to-back. Interacts with the co-chaperonin GroES.

Its subcellular location is the cytoplasm. It catalyses the reaction ATP + H2O + a folded polypeptide = ADP + phosphate + an unfolded polypeptide.. Together with its co-chaperonin GroES, plays an essential role in assisting protein folding. The GroEL-GroES system forms a nano-cage that allows encapsulation of the non-native substrate proteins and provides a physical environment optimized to promote and accelerate protein folding. The chain is Chaperonin GroEL from Histophilus somni (strain 129Pt) (Haemophilus somnus).